A 276-amino-acid polypeptide reads, in one-letter code: Diacetylchitobiose uptake system permease protein DasC (276 aa).

The next 6 helical transmembrane spans lie at 14–34 (TAVV…ATAF), 74–94 (LIVT…GSFA), 105–125 (GFIV…VIAI), 137–157 (SLVP…ILTL), 186–206 (VILP…FITA), and 241–261 (GATM…FVYL). In terms of domain architecture, ABC transmembrane type-1 spans 70-261 (VSNSLIVTVC…IPILILFVYL (192 aa)).

The protein belongs to the binding-protein-dependent transport system permease family. In terms of assembly, the complex is composed of two ATP-binding proteins (MsiK), two transmembrane proteins (DasB and DasC) and a solute-binding protein (DasA).

It is found in the cell membrane. Its function is as follows. Part of the ABC transporter complex DasABC-MsiK involved in N,N'-diacetylchitobiose ((GlcNAc)2) uptake. Responsible for the translocation of the substrate across the membrane. The chain is Diacetylchitobiose uptake system permease protein DasC from Streptomyces coelicolor (strain ATCC BAA-471 / A3(2) / M145).